A 93-amino-acid polypeptide reads, in one-letter code: Protein FptB (93 aa).

A signal peptide spans 1–25 (MPRQSGFGWAWRVPLALAGSLAAAT). 2 helical membrane passes run 44–64 (LYAG…GGLL) and 71–91 (FAWR…LLAG).

The protein localises to the cell membrane. Its function is as follows. May play some role in transport of Fe(3+)-pyochelin. In Pseudomonas aeruginosa (strain ATCC 15692 / DSM 22644 / CIP 104116 / JCM 14847 / LMG 12228 / 1C / PRS 101 / PAO1), this protein is Protein FptB (fptB).